A 274-amino-acid chain; its full sequence is Aliphatic sulfonates import ATP-binding protein SsuB 2 (274 aa).

Residues leucine 21–leucine 242 enclose the ABC transporter domain. Glycine 53 to serine 60 provides a ligand contact to ATP.

Belongs to the ABC transporter superfamily. Aliphatic sulfonates importer (TC 3.A.1.17.2) family. The complex is composed of two ATP-binding proteins (SsuB), two transmembrane proteins (SsuC) and a solute-binding protein (SsuA).

It localises to the cell inner membrane. It carries out the reaction ATP + H2O + aliphatic sulfonate-[sulfonate-binding protein]Side 1 = ADP + phosphate + aliphatic sulfonateSide 2 + [sulfonate-binding protein]Side 1.. Its function is as follows. Part of the ABC transporter complex SsuABC involved in aliphatic sulfonates import. Responsible for energy coupling to the transport system. This chain is Aliphatic sulfonates import ATP-binding protein SsuB 2, found in Pseudomonas aeruginosa (strain UCBPP-PA14).